We begin with the raw amino-acid sequence, 122 residues long: UPF0382 membrane protein SERP0230 (122 aa).

4 helical membrane-spanning segments follow: residues 3 to 23 (VFIILGALNAMMAVGTGAFGA), 46 to 66 (MYHGLGLLVIGLISGTTSINV), 69 to 89 (AGWLLFFGIVFFSGSLYFLAL), and 98 to 118 (ITPIGGVLFIIGWLVLVIATL).

This sequence belongs to the UPF0382 family.

The protein localises to the cell membrane. This is UPF0382 membrane protein SERP0230 from Staphylococcus epidermidis (strain ATCC 35984 / DSM 28319 / BCRC 17069 / CCUG 31568 / BM 3577 / RP62A).